Here is a 197-residue protein sequence, read N- to C-terminus: Xanthine phosphoribosyltransferase (197 aa).

Xanthine contacts are provided by Leu-20 and Asn-27. Residue 128–132 coordinates 5-phospho-alpha-D-ribose 1-diphosphate; sequence ANGQA. A xanthine-binding site is contributed by Lys-156.

It belongs to the purine/pyrimidine phosphoribosyltransferase family. Xpt subfamily. Homodimer.

The protein resides in the cytoplasm. It carries out the reaction XMP + diphosphate = xanthine + 5-phospho-alpha-D-ribose 1-diphosphate. It functions in the pathway purine metabolism; XMP biosynthesis via salvage pathway; XMP from xanthine: step 1/1. Converts the preformed base xanthine, a product of nucleic acid breakdown, to xanthosine 5'-monophosphate (XMP), so it can be reused for RNA or DNA synthesis. This is Xanthine phosphoribosyltransferase from Bacillus mycoides (strain KBAB4) (Bacillus weihenstephanensis).